Consider the following 186-residue polypeptide: Probable chorismate pyruvate-lyase (186 aa).

Arg78, Leu116, and Glu175 together coordinate substrate.

The protein belongs to the UbiC family.

It is found in the cytoplasm. It catalyses the reaction chorismate = 4-hydroxybenzoate + pyruvate. It participates in cofactor biosynthesis; ubiquinone biosynthesis. Removes the pyruvyl group from chorismate, with concomitant aromatization of the ring, to provide 4-hydroxybenzoate (4HB) for the ubiquinone pathway. This Psychromonas ingrahamii (strain DSM 17664 / CCUG 51855 / 37) protein is Probable chorismate pyruvate-lyase.